The chain runs to 338 residues: tRNA N6-adenosine threonylcarbamoyltransferase (338 aa).

2 residues coordinate Fe cation: H110 and H114. Substrate is bound by residues 132-136 (VLSGG), D165, G178, and N274. Residue D298 participates in Fe cation binding.

The protein belongs to the KAE1 / TsaD family. Requires Fe(2+) as cofactor.

Its subcellular location is the cytoplasm. The catalysed reaction is L-threonylcarbamoyladenylate + adenosine(37) in tRNA = N(6)-L-threonylcarbamoyladenosine(37) in tRNA + AMP + H(+). In terms of biological role, required for the formation of a threonylcarbamoyl group on adenosine at position 37 (t(6)A37) in tRNAs that read codons beginning with adenine. Is involved in the transfer of the threonylcarbamoyl moiety of threonylcarbamoyl-AMP (TC-AMP) to the N6 group of A37, together with TsaE and TsaB. TsaD likely plays a direct catalytic role in this reaction. The sequence is that of tRNA N6-adenosine threonylcarbamoyltransferase from Borrelia duttonii (strain Ly).